A 237-amino-acid chain; its full sequence is UDP-Gal:alpha-D-GlcNAc-diphosphoundecaprenol beta-1,4-galactosyltransferase (237 aa).

Glu101 serves as the catalytic Nucleophile.

The protein belongs to the glycosyltransferase 26 family. The cofactor is Mn(2+). Requires Ni(2+) as cofactor. It depends on Pb(2+) as a cofactor.

The enzyme catalyses N-acetyl-alpha-D-glucosaminyl-di-trans,octa-cis-undecaprenyl diphosphate + UDP-alpha-D-galactose = beta-D-Gal-(1-&gt;4)-alpha-D-GlcNAc-di-trans,octa-cis-undecaprenyl diphosphate + UDP + H(+). Its pathway is bacterial outer membrane biogenesis; LPS O-antigen biosynthesis. Its function is as follows. Galactosyltransferase that adds one galactose residue in the beta-1-4 linkage to GlcNAc-alpha-pyrophosphate-lipid in the biosynthesis of the O-polysaccharide repeating unit of the O antigen. The polypeptide is UDP-Gal:alpha-D-GlcNAc-diphosphoundecaprenol beta-1,4-galactosyltransferase (wfeD) (Shigella boydii).